The sequence spans 828 residues: DNA gyrase subunit A (828 aa).

One can recognise a Topo IIA-type catalytic domain in the interval 32–497; it reads LPDVRDGLKP…EVLSLEDEDL (466 aa). Catalysis depends on Tyr-120, which acts as the O-(5'-phospho-DNA)-tyrosine intermediate. The short motif at 524-530 is the GyrA-box element; that stretch reads QKRGGRG.

This sequence belongs to the type II topoisomerase GyrA/ParC subunit family. Heterotetramer, composed of two GyrA and two GyrB chains. In the heterotetramer, GyrA contains the active site tyrosine that forms a transient covalent intermediate with DNA, while GyrB binds cofactors and catalyzes ATP hydrolysis.

Its subcellular location is the cytoplasm. The enzyme catalyses ATP-dependent breakage, passage and rejoining of double-stranded DNA.. Its function is as follows. A type II topoisomerase that negatively supercoils closed circular double-stranded (ds) DNA in an ATP-dependent manner to modulate DNA topology and maintain chromosomes in an underwound state. Negative supercoiling favors strand separation, and DNA replication, transcription, recombination and repair, all of which involve strand separation. Also able to catalyze the interconversion of other topological isomers of dsDNA rings, including catenanes and knotted rings. Type II topoisomerases break and join 2 DNA strands simultaneously in an ATP-dependent manner. This chain is DNA gyrase subunit A, found in Streptococcus pyogenes serotype M18 (strain MGAS8232).